The chain runs to 84 residues: Turripeptide IX-03 (84 aa).

The N-terminal stretch at 1 to 21 (MGFYMLLTVALLLTSLMNVEA) is a signal peptide. A propeptide spanning residues 22–39 (TPVDQAERSALEKSGLGN) is cleaved from the precursor. 3 disulfide bridges follow: Cys48–Cys70, Cys55–Cys74, and Cys60–Cys81.

Expressed by the venom duct.

It is found in the secreted. This chain is Turripeptide IX-03, found in Gemmula speciosa (Splendid gem-turris).